A 799-amino-acid chain; its full sequence is Histidine biosynthesis trifunctional protein (799 aa).

The phosphoribosyl-AMP cyclohydrolase stretch occupies residues 1–229 (MVLPILPLID…FIVEQENVGF (229 aa)). The phosphoribosyl-ATP pyrophosphohydrolase stretch occupies residues 230-312 (CHLETMSCFG…FYFALAKLVA (83 aa)). The tract at residues 313 to 799 (NDVSLKDVEN…KLGLIPKDFQ (487 aa)) is histidinol dehydrogenase. Gln618 and His621 together coordinate Zn(2+). Residues Glu687 and His688 contribute to the active site. Positions 721 and 780 each coordinate Zn(2+).

This sequence in the C-terminal section; belongs to the histidinol dehydrogenase family. Zn(2+) is required as a cofactor.

It catalyses the reaction 1-(5-phospho-beta-D-ribosyl)-5'-AMP + H2O = 1-(5-phospho-beta-D-ribosyl)-5-[(5-phospho-beta-D-ribosylamino)methylideneamino]imidazole-4-carboxamide. The enzyme catalyses 1-(5-phospho-beta-D-ribosyl)-ATP + H2O = 1-(5-phospho-beta-D-ribosyl)-5'-AMP + diphosphate + H(+). It carries out the reaction L-histidinol + 2 NAD(+) + H2O = L-histidine + 2 NADH + 3 H(+). It participates in amino-acid biosynthesis; L-histidine biosynthesis; L-histidine from 5-phospho-alpha-D-ribose 1-diphosphate: step 2/9. It functions in the pathway amino-acid biosynthesis; L-histidine biosynthesis; L-histidine from 5-phospho-alpha-D-ribose 1-diphosphate: step 3/9. Its pathway is amino-acid biosynthesis; L-histidine biosynthesis; L-histidine from 5-phospho-alpha-D-ribose 1-diphosphate: step 9/9. The polypeptide is Histidine biosynthesis trifunctional protein (Saccharomyces cerevisiae (strain ATCC 204508 / S288c) (Baker's yeast)).